A 124-amino-acid chain; its full sequence is Small ribosomal subunit protein uS13 (124 aa).

The disordered stretch occupies residues 96 to 124; that stretch reads LPVRGQRTKTNARTRKGPRRTVAGKKKAK.

The protein belongs to the universal ribosomal protein uS13 family. As to quaternary structure, part of the 30S ribosomal subunit. Forms a loose heterodimer with protein S19. Forms two bridges to the 50S subunit in the 70S ribosome.

Functionally, located at the top of the head of the 30S subunit, it contacts several helices of the 16S rRNA. In the 70S ribosome it contacts the 23S rRNA (bridge B1a) and protein L5 of the 50S subunit (bridge B1b), connecting the 2 subunits; these bridges are implicated in subunit movement. Contacts the tRNAs in the A and P-sites. The chain is Small ribosomal subunit protein uS13 from Symbiobacterium thermophilum (strain DSM 24528 / JCM 14929 / IAM 14863 / T).